The primary structure comprises 141 residues: Large ribosomal subunit protein uL11 (141 aa).

This sequence belongs to the universal ribosomal protein uL11 family. As to quaternary structure, part of the ribosomal stalk of the 50S ribosomal subunit. Interacts with L10 and the large rRNA to form the base of the stalk. L10 forms an elongated spine to which L12 dimers bind in a sequential fashion forming a multimeric L10(L12)X complex. Post-translationally, one or more lysine residues are methylated.

Its function is as follows. Forms part of the ribosomal stalk which helps the ribosome interact with GTP-bound translation factors. The sequence is that of Large ribosomal subunit protein uL11 from Aster yellows witches'-broom phytoplasma (strain AYWB).